We begin with the raw amino-acid sequence, 157 residues long: uncharacterized protein (157 aa).

Disordered regions lie at residues 76-105 (AINQELHLTPHKKTSPATSSSLKPRPGPRG) and 132-157 (VRAPSTKPSKTSSSNNPWPLTPRMRG). The span at 135–148 (PSTKPSKTSSSNNP) shows a compositional bias: low complexity.

To M.pneumoniae MPN_091 and MPN_413.

This is an uncharacterized protein from Mycoplasma pneumoniae (strain ATCC 29342 / M129 / Subtype 1) (Mycoplasmoides pneumoniae).